The following is a 304-amino-acid chain: Killer cell immunoglobulin-like receptor 2DS2 (304 aa).

An N-terminal signal peptide occupies residues 1–21; the sequence is MSLMVVSMACVGFFLLQGAWP. Topologically, residues 22 to 245 are extracellular; the sequence is HEGVHRKPSL…SKTGNPRHLH (224 aa). Ig-like C2-type domains lie at 42-107 and 142-205; these read EETV…VTHS and GESV…FRDS. Cystine bridges form between cysteine 49/cysteine 100 and cysteine 149/cysteine 198. N-linked (GlcNAc...) asparagine glycans are attached at residues asparagine 84, asparagine 178, and asparagine 211. The disordered stretch occupies residues 220–239; sequence VTGNPSNSWPSPTEPSSKTG. Residues 246–265 traverse the membrane as a helical segment; it reads VLIGTSVVKIPFTILLFFLL. Residues 266 to 304 lie on the Cytoplasmic side of the membrane; that stretch reads HRWCSNKKNAAVMDQEPAGNRTVNSEDSDEQDHQEVSYA. Residues 280–304 form a disordered region; sequence QEPAGNRTVNSEDSDEQDHQEVSYA.

The protein belongs to the immunoglobulin superfamily.

It is found in the cell membrane. Receptor on natural killer (NK) cells for HLA-C alleles. Does not inhibit the activity of NK cells. The chain is Killer cell immunoglobulin-like receptor 2DS2 from Homo sapiens (Human).